Consider the following 411-residue polypeptide: UPF0261 protein SACE_5696 (411 aa).

It belongs to the UPF0261 family.

This Saccharopolyspora erythraea (strain ATCC 11635 / DSM 40517 / JCM 4748 / NBRC 13426 / NCIMB 8594 / NRRL 2338) protein is UPF0261 protein SACE_5696.